Consider the following 941-residue polypeptide: Pre-mRNA-processing factor 6 (941 aa).

Residues 1–79 (MNKKKKPFLG…DEDLNDTNYD (79 aa)) are disordered. A compositionally biased stretch (basic and acidic residues) spans 39–65 (DANDPVDDRHAPPGKRTVGDQMKKNQA). The segment covering 66 to 78 (ADDDDEDLNDTNY) has biased composition (acidic residues). Phosphoserine is present on S143. Phosphothreonine is present on residues T180, T266, and T275. S279 bears the Phosphoserine mark. HAT repeat units follow at residues 384-416 (TDIR…LEEP), 418-444 (DARI…ARLE), 445-476 (TYEN…LEEA), 554-586 (NALE…FEKN), 588-620 (GTRE…SKWL), 622-654 (GDVP…LESE), 689-721 (DNIR…IEEQ), 723-755 (EMME…LEEK), and 855-887 (RKIT…FELQ).

In terms of assembly, identified in the spliceosome B complex. Identified in the spliceosome C complex. Associates with the U5 snRNP particle. Component of the U4/U6-U5 tri-snRNP complex composed of the U4, U6 and U5 snRNAs and at least PRPF3, PRPF4, PRPF6, PRPF8, PRPF31, SNRNP200, TXNL4A, SNRNP40, DDX23, CD2BP2, PPIH, SNU13, EFTUD2, SART1 and USP39, LSm proteins LSm2-8 and Sm proteins. Interacts with ARAF. Interacts with AR and NR3C1, but not ESR1, independently of the presence of hormones. Interacts with USH1G. In terms of processing, phosphorylated by PRP4K during spliceosome assembly. In terms of tissue distribution, widely expressed.

It localises to the nucleus. The protein localises to the nucleoplasm. Its subcellular location is the nucleus speckle. Its function is as follows. Involved in pre-mRNA splicing as component of the U4/U6-U5 tri-snRNP complex, one of the building blocks of the spliceosome. Enhances dihydrotestosterone-induced transactivation activity of AR, as well as dexamethasone-induced transactivation activity of NR3C1, but does not affect estrogen-induced transactivation. The sequence is that of Pre-mRNA-processing factor 6 from Homo sapiens (Human).